A 154-amino-acid polypeptide reads, in one-letter code: MEVRTVEGGFIGKGLRMGVVVARFNDLLTGELLKGALDCFERHGVEEVDVVKVPGSFEIPLVAKKMAESGRYDAVLALGAVVRGETKHFDLVANEVAKGVANVSLDTGVPVIFGVITVEDELQGFNRAGVKSNKGFEYAMAALEMADLMRKMEE.

5-amino-6-(D-ribitylamino)uracil is bound by residues phenylalanine 24, 56–58, and 80–82; these read SFE and AVV. Position 85-86 (85-86) interacts with (2S)-2-hydroxy-3-oxobutyl phosphate; that stretch reads ET. The active-site Proton donor is histidine 88. Phenylalanine 113 is a binding site for 5-amino-6-(D-ribitylamino)uracil. Position 127 (arginine 127) interacts with (2S)-2-hydroxy-3-oxobutyl phosphate.

Belongs to the DMRL synthase family.

The catalysed reaction is (2S)-2-hydroxy-3-oxobutyl phosphate + 5-amino-6-(D-ribitylamino)uracil = 6,7-dimethyl-8-(1-D-ribityl)lumazine + phosphate + 2 H2O + H(+). It participates in cofactor biosynthesis; riboflavin biosynthesis; riboflavin from 2-hydroxy-3-oxobutyl phosphate and 5-amino-6-(D-ribitylamino)uracil: step 1/2. Functionally, catalyzes the formation of 6,7-dimethyl-8-ribityllumazine by condensation of 5-amino-6-(D-ribitylamino)uracil with 3,4-dihydroxy-2-butanone 4-phosphate. This is the penultimate step in the biosynthesis of riboflavin. This is 6,7-dimethyl-8-ribityllumazine synthase from Thermococcus gammatolerans (strain DSM 15229 / JCM 11827 / EJ3).